The primary structure comprises 734 residues: Photosystem I P700 chlorophyll a apoprotein A2 (734 aa).

A run of 8 helical transmembrane segments spans residues 46-69 (IFASHFGQLAIIFLWTSGNLFHVA), 135-158 (LYTGALFLLCLSAISLIAGWLHLQ), 175-199 (LNHHLSGLFGVSSLAWAGHLVHVAI), 273-291 (IAHHHLAIAFLFLVAGHMY), 330-353 (IHFQLGLALASLGVITSLVAQHMY), 369-395 (AALYTHHQYIAGFIMTGAFAHGAIFFI), 417-439 (AIISHLSWASLFLGFHTLGLYVH), and 517-535 (FLVHHAIALGLHTTTLILV). Positions 559 and 568 each coordinate [4Fe-4S] cluster. The next 2 membrane-spanning stretches (helical) occupy residues 575–596 (AFYLAVFWMLNTIGWVTFYWHW) and 643–665 (LSVWAWMFLFGHLVWATGFMFLI). The chlorophyll a site is built by His-654, Met-662, and Tyr-670. Residue Trp-671 participates in phylloquinone binding. Residues 707–727 (LVGLAHFSVGYIFTYAAFLIA) form a helical membrane-spanning segment.

This sequence belongs to the PsaA/PsaB family. As to quaternary structure, the PsaA/B heterodimer binds the P700 chlorophyll special pair and subsequent electron acceptors. PSI consists of a core antenna complex that captures photons, and an electron transfer chain that converts photonic excitation into a charge separation. The eukaryotic PSI reaction center is composed of at least 11 subunits. Requires P700 is a chlorophyll a/chlorophyll a' dimer, A0 is one or more chlorophyll a, A1 is one or both phylloquinones and FX is a shared 4Fe-4S iron-sulfur center. as cofactor.

Its subcellular location is the plastid. It is found in the chloroplast thylakoid membrane. It carries out the reaction reduced [plastocyanin] + hnu + oxidized [2Fe-2S]-[ferredoxin] = oxidized [plastocyanin] + reduced [2Fe-2S]-[ferredoxin]. In terms of biological role, psaA and PsaB bind P700, the primary electron donor of photosystem I (PSI), as well as the electron acceptors A0, A1 and FX. PSI is a plastocyanin-ferredoxin oxidoreductase, converting photonic excitation into a charge separation, which transfers an electron from the donor P700 chlorophyll pair to the spectroscopically characterized acceptors A0, A1, FX, FA and FB in turn. Oxidized P700 is reduced on the lumenal side of the thylakoid membrane by plastocyanin. The polypeptide is Photosystem I P700 chlorophyll a apoprotein A2 (Dioscorea elephantipes (Elephant's foot yam)).